Here is a 173-residue protein sequence, read N- to C-terminus: Photosystem I assembly protein Ycf3 (173 aa).

TPR repeat units lie at residues 35–68 (AYVYYRDGLSAQNDGDYAEALENYEEALKLEENS), 72–105 (SETLKNMAIIYMSNGEEERAIETYRKALEENPNQ), and 120–153 (GRIAEEGGEQDSADRWFDQAADVWTQAVRLNPGG).

It belongs to the Ycf3 family.

It is found in the cellular thylakoid membrane. Essential for the assembly of the photosystem I (PSI) complex. May act as a chaperone-like factor to guide the assembly of the PSI subunits. The sequence is that of Photosystem I assembly protein Ycf3 from Synechococcus sp. (strain CC9605).